Here is a 150-residue protein sequence, read N- to C-terminus: Probable cyclic pyranopterin monophosphate synthase (150 aa).

Residues Tyr-68–His-70 and Met-104–Glu-105 each bind substrate. Asp-119 is an active-site residue.

This sequence belongs to the MoaC family. As to quaternary structure, homohexamer; trimer of dimers.

The catalysed reaction is (8S)-3',8-cyclo-7,8-dihydroguanosine 5'-triphosphate = cyclic pyranopterin phosphate + diphosphate. It functions in the pathway cofactor biosynthesis; molybdopterin biosynthesis. Its function is as follows. Catalyzes the conversion of (8S)-3',8-cyclo-7,8-dihydroguanosine 5'-triphosphate to cyclic pyranopterin monophosphate (cPMP). In Thermoplasma volcanium (strain ATCC 51530 / DSM 4299 / JCM 9571 / NBRC 15438 / GSS1), this protein is Probable cyclic pyranopterin monophosphate synthase.